Here is a 253-residue protein sequence, read N- to C-terminus: Flap endonuclease Xni (253 aa).

Asp105 lines the Mg(2+) pocket. The 5'-3' exonuclease domain occupies 162 to 251 (ERHQLLDYIA…HLKLSDLRVN (90 aa)). K(+)-binding residues include Leu172, Pro181, Ile183, and Ile186. The segment at 185-190 (GIGPKS) is interaction with DNA.

This sequence belongs to the Xni family. Mg(2+) is required as a cofactor. K(+) serves as cofactor.

In terms of biological role, has flap endonuclease activity. During DNA replication, flap endonucleases cleave the 5'-overhanging flap structure that is generated by displacement synthesis when DNA polymerase encounters the 5'-end of a downstream Okazaki fragment. This Shewanella amazonensis (strain ATCC BAA-1098 / SB2B) protein is Flap endonuclease Xni.